The chain runs to 287 residues: Toxin zeta (287 aa).

ATP is bound at residue 40–47 (GQPGSGKT). Asparagine 66 lines the substrate pocket. Residue aspartate 67 is the Proton acceptor of the active site. Positions 100, 118, 120, and 128 each coordinate substrate. The segment at 267–287 (KLESLQPPTPPIPKTPKLPGI) is disordered. Residues 273–287 (PPTPPIPKTPKLPGI) show a composition bias toward pro residues.

Belongs to the zeta toxin family. As to quaternary structure, in the presence of the epsilon antitoxin forms an inactive PezA(2)PezT(2) heterotetramer. The heterotetramer is still able to bind the UNAG substrate.

The enzyme catalyses UDP-N-acetyl-alpha-D-glucosamine + ATP = UDP-N-acetyl-alpha-D-glucosamine 3'-phosphate + ADP + H(+). Functionally, toxic component of a type II toxin-antitoxin (TA) system. Phosphorylates UDP-N-acetyl-D-glucosamine (UNAG) on the 3'-hydroxyl group of the N-acetyl-D-glucosamine moiety, yielding UNAG-3P. UNAG-3P inhibits MurA, the first committed step in cell wall synthesis, which is then blocked. Phosphorylation is inhibited by cognate epsilon antitoxin. Part of a postsegregational killing (PSK) system involved in the killing of plasmid-free cells. The zeta toxin induces programmed cell death. The polypeptide is Toxin zeta (Streptococcus pyogenes).